Consider the following 658-residue polypeptide: Protein CFAP20DC (658 aa).

Disordered regions lie at residues 312–522 (QQGE…EEEY) and 589–634 (PVNQ…LDSS). The span at 319 to 328 (SHPVKQTTPL) shows a compositional bias: polar residues. The span at 339-349 (PPRDPSADKGS) shows a compositional bias: basic and acidic residues. 2 stretches are compositionally biased toward low complexity: residues 351–363 (RRGL…SGSR) and 417–434 (SSGP…LLLD). Over residues 494–506 (DPKEDSRVTKGDT) the composition is skewed to basic and acidic residues. Acidic residues predominate over residues 507 to 521 (ELEDDFYGSDSSEEE). The span at 625–634 (QPLEQSLDSS) shows a compositional bias: polar residues.

The sequence is that of Protein CFAP20DC from Rattus norvegicus (Rat).